The chain runs to 397 residues: Lysophospholipid transporter LplT (397 aa).

Residues 1–17 (MSESVHTNTSLWSKGMK) lie on the Periplasmic side of the membrane. A helical membrane pass occupies residues 18–38 (AVIVAQFLSAFGDNALLFATL). Residues 39–52 (ALLNAQFYPEWSQP) are Cytoplasmic-facing. A helical membrane pass occupies residues 53–73 (ILQMVFVGAYILFAPFVGQVA). The Periplasmic segment spans residues 74-90 (DSFAKGRVMMFANGLKL). The chain crosses the membrane as a helical span at residues 91-111 (LGAASICFGINPFLGYTLVGV). At 112-144 (GAAAYSPAKYGILGELTTGSKLVKANGLMEAST) the chain is on the cytoplasmic side. A helical transmembrane segment spans residues 145–165 (IAAILLGSVAGGVLADWHVLV). Residue Ala-166 is a topological domain, periplasmic. Residues 167-187 (LAACALAYGGAVVANIYIPKL) form a helical membrane-spanning segment. Over 188 to 226 (AAARPGQSWNLINMTRSFLNACTSLWRNGETRFSLVGTS) the chain is Cytoplasmic. A helical membrane pass occupies residues 227 to 247 (LFWGAGVTLRFLLVLWVPVAL). Residues 248 to 256 (GITDNATPT) are Periplasmic-facing. A helical membrane pass occupies residues 257–277 (YLNAMVAIGIVVGAGAAAKLV). At 278-280 (TLE) the chain is on the cytoplasmic side. A helical transmembrane segment spans residues 281–301 (TVSRCMPAGILIGVVVLIFSL). The Periplasmic portion of the chain corresponds to 302–304 (QHE). Residues 305–325 (LLPAYALLMLIGVMGGFFVVP) form a helical membrane-spanning segment. Residues 326 to 343 (LNALLQERGKKSVGAGNA) are Cytoplasmic-facing. Residues 344–364 (IAVQNLGENSAMLLMLGIYSL) traverse the membrane as a helical segment. At 365–366 (AV) the chain is on the periplasmic side. Residues 367–387 (MIGIPVVPIGIGFGALFALAI) form a helical membrane-spanning segment. Residues 388-397 (TALWIWQRRH) lie on the Cytoplasmic side of the membrane.

This sequence belongs to the major facilitator superfamily. LplT (TC 2.A.1.42) family.

The protein resides in the cell inner membrane. Functionally, catalyzes the facilitated diffusion of 2-acyl-glycero-3-phosphoethanolamine (2-acyl-GPE) into the cell. The sequence is that of Lysophospholipid transporter LplT from Escherichia coli (strain SE11).